Here is a 514-residue protein sequence, read N- to C-terminus: ATP synthase subunit alpha (514 aa).

Residue 170–177 coordinates ATP; sequence GDRQTGKT.

Belongs to the ATPase alpha/beta chains family. F-type ATPases have 2 components, CF(1) - the catalytic core - and CF(0) - the membrane proton channel. CF(1) has five subunits: alpha(3), beta(3), gamma(1), delta(1), epsilon(1). CF(0) has three main subunits: a(1), b(2) and c(9-12). The alpha and beta chains form an alternating ring which encloses part of the gamma chain. CF(1) is attached to CF(0) by a central stalk formed by the gamma and epsilon chains, while a peripheral stalk is formed by the delta and b chains.

It is found in the cell inner membrane. The enzyme catalyses ATP + H2O + 4 H(+)(in) = ADP + phosphate + 5 H(+)(out). In terms of biological role, produces ATP from ADP in the presence of a proton gradient across the membrane. The alpha chain is a regulatory subunit. The polypeptide is ATP synthase subunit alpha (Psychrobacter cryohalolentis (strain ATCC BAA-1226 / DSM 17306 / VKM B-2378 / K5)).